The sequence spans 231 residues: Aldehyde decarbonylase (231 aa).

Residues Glu32, Glu60, His63, Glu115, and His147 each contribute to the Fe cation site.

Belongs to the aldehyde decarbonylase family. Binds 2 metal cations per subunit. The catalytic dinuclear metal-binding site could be either a di-iron or a manganese-iron cofactor. serves as cofactor.

It carries out the reaction a long-chain fatty aldehyde + 2 NADPH + O2 + H(+) = a long-chain alkane + formate + 2 NADP(+) + H2O. Catalyzes the decarbonylation of fatty aldehydes to alkanes. Requires the presence of ferredoxin, ferredoxin reductase and NADPH for in vitro decarbonylase activity. Involved in the biosynthesis of alkanes, mainly heptadecane and pentadecane. This Synechococcus elongatus (strain ATCC 33912 / PCC 7942 / FACHB-805) (Anacystis nidulans R2) protein is Aldehyde decarbonylase.